Here is a 470-residue protein sequence, read N- to C-terminus: Transcription factor SOX-8 (470 aa).

The segment covering 1-12 (MLNMTEEHDKAL) has biased composition (basic and acidic residues). The segment at 1–60 (MLNMTEEHDKALEAPCSPAGTTSSMSHVDSDSDSPLSPAGSEGLGCAPAPAPRPPGAAPL) is disordered. The interval 67-107 (AEVDERFPACIRDAVSQVLKGYDWSLVPMPVRGNGSLKAKP) is dimerization (DIM). The segment at residues 109-177 (VKRPMNAFMV…QHKKDHPDYK (69 aa)) is a DNA-binding region (HMG box). Basic and acidic residues-rich tracts occupy residues 163 to 178 (ERLR…DYKY), 219 to 228 (DGHHHGEHAG), and 242 to 257 (TDLH…HEGR). Disordered regions lie at residues 163–257 (ERLR…HEGR) and 327–381 (AGGA…DYGS). The interval 233 to 308 (PPTPPTTPKT…LNGHTAMPAD (76 aa)) is transactivation domain (TAM). Positions 338–349 (SPASASPSSADS) are enriched in low complexity. Residues 353-470 (RPHIKTEQLS…QPVYTTLTRP (118 aa)) form a transactivation domain (TAC) region. Positions 359–372 (EQLSPSHYSDQSHG) are enriched in polar residues. The 9aaTAD signature appears at 424–432 (SSIYQYPYF).

As to expression, widely expressed in the embryo.

It localises to the nucleus. Its function is as follows. Transcription factor that may play a role in central nervous system, limb and facial development. May be involved in male sex determination. Binds the consensus motif 5'-[AT][AT]CAA[AT]G-3'. This Gallus gallus (Chicken) protein is Transcription factor SOX-8 (SOX8).